A 404-amino-acid chain; its full sequence is Serine/threonine transporter SstT (404 aa).

Helical transmembrane passes span 17-37 (IGIGVVIGLLLGILLPDVTAI), 39-59 (ILGQLFVGALKAIAPLLVFAL), 75-95 (MTLIIVLYLLGTFLAALVAVI), 138-158 (ALATANYIGVLAWALIFGLAL), 179-199 (IVVWIINVAPIGIMGLVFSTV), 212-232 (LLILVLVGTMLFVALVVNPLL), 287-307 (IPLGAMINMGGAAITINVLTL), 319-339 (FLTALLLSVVAAISACGASGV), and 354-374 (FGISSDLAMQVVGVGFIVGVI).

Belongs to the dicarboxylate/amino acid:cation symporter (DAACS) (TC 2.A.23) family.

The protein localises to the cell membrane. The enzyme catalyses L-serine(in) + Na(+)(in) = L-serine(out) + Na(+)(out). It catalyses the reaction L-threonine(in) + Na(+)(in) = L-threonine(out) + Na(+)(out). Involved in the import of serine and threonine into the cell, with the concomitant import of sodium (symport system). The polypeptide is Serine/threonine transporter SstT (Streptococcus equi subsp. equi (strain 4047)).